The chain runs to 194 residues: Small ribosomal subunit protein uS4 (194 aa).

At Lys66 the chain carries N6-acetyllysine. A Glycyl lysine isopeptide (Lys-Gly) (interchain with G-Cter in SUMO2) cross-link involves residue Lys93. The S4 RNA-binding domain occupies 108–182; it reads RRLQTQVFKL…VKRKNAKKGQ (75 aa). Position 116 is an N6-acetyllysine (Lys116). Lys139 participates in a covalent cross-link: Glycyl lysine isopeptide (Lys-Gly) (interchain with G-Cter in SUMO2). Residue Ser153 is modified to Phosphoserine. Lys155 carries the post-translational modification N6-acetyllysine. The tract at residues 162–194 is disordered; sequence RSPYGGGRPGRVKRKNAKKGQGGAGAGDDEEED. Ser163 is subject to Phosphoserine.

The protein belongs to the universal ribosomal protein uS4 family. As to quaternary structure, component of the small ribosomal subunit. Part of the small subunit (SSU) processome, composed of more than 70 proteins and the RNA chaperone small nucleolar RNA (snoRNA) U3.

Its subcellular location is the cytoplasm. The protein localises to the nucleus. It localises to the nucleolus. Its function is as follows. Component of the small ribosomal subunit. The ribosome is a large ribonucleoprotein complex responsible for the synthesis of proteins in the cell. Part of the small subunit (SSU) processome, first precursor of the small eukaryotic ribosomal subunit. During the assembly of the SSU processome in the nucleolus, many ribosome biogenesis factors, an RNA chaperone and ribosomal proteins associate with the nascent pre-rRNA and work in concert to generate RNA folding, modifications, rearrangements and cleavage as well as targeted degradation of pre-ribosomal RNA by the RNA exosome. In Papio anubis (Olive baboon), this protein is Small ribosomal subunit protein uS4 (RPS9).